Consider the following 419-residue polypeptide: Carboxypeptidase A1 (419 aa).

Residues 1 to 16 (MQGLLILSVLLGAALG) form the signal peptide. A propeptide spans 17-110 (KEDFVGHQVL…QEQMFASQSR (94 aa)) (activation peptide). Residues 121-414 (TYHTLDEIYD…LGVLTIMEHT (294 aa)) enclose the Peptidase M14 domain. The Zn(2+) site is built by H179 and E182. Substrate contacts are provided by residues 179–182 (HSRE), R237, and 254–255 (NR). A disulfide bridge connects residues C248 and C271. Zn(2+) is bound at residue H306. Substrate is bound by residues 307–308 (SY) and Y358. Catalysis depends on E380, which acts as the Proton donor/acceptor.

Belongs to the peptidase M14 family. In terms of assembly, monomer. May form a complex with proelastase 2. Zn(2+) serves as cofactor. As to expression, pancreas.

It is found in the secreted. It catalyses the reaction Release of a C-terminal amino acid, but little or no action with -Asp, -Glu, -Arg, -Lys or -Pro.. The enzyme catalyses leukotriene C4 + H2O = leukotriene F4 + glycine. Its activity is regulated as follows. Inhibited by interaction with the S.magnifica carboxypeptidase inhibitor SmCI. Its function is as follows. Carboxypeptidase that catalyzes the release of a C-terminal amino acid, but has little or no action with -Asp, -Glu, -Arg, -Lys or -Pro. Catalyzes the conversion of leukotriene C4 to leukotriene F4 via the hydrolysis of an amide bond. This Bos taurus (Bovine) protein is Carboxypeptidase A1 (CPA1).